Consider the following 288-residue polypeptide: Cell division protein ZipA (288 aa).

Position 1 (M1) is a topological domain, periplasmic. Residues 2 to 22 (EIGLREWLIVIGIIVIAGILF) traverse the membrane as a helical segment. Residues 23–288 (DGWRRMRGGK…ERRALTQRRG (266 aa)) are Cytoplasmic-facing. The tract at residues 48 to 138 (DEEETTSAEV…DDKPAQRITE (91 aa)) is disordered. 3 stretches are compositionally biased toward basic and acidic residues: residues 64-77 (LDTHKEPQLDEHDL), 85-105 (RDNKRGAGSEKRGDKKRKDEP), and 122-138 (ARDDDFPDDKPAQRITE).

This sequence belongs to the ZipA family. Interacts with FtsZ via their C-terminal domains.

It localises to the cell inner membrane. Functionally, essential cell division protein that stabilizes the FtsZ protofilaments by cross-linking them and that serves as a cytoplasmic membrane anchor for the Z ring. Also required for the recruitment to the septal ring of downstream cell division proteins. The protein is Cell division protein ZipA of Pseudomonas syringae pv. tomato (strain ATCC BAA-871 / DC3000).